Reading from the N-terminus, the 248-residue chain is TPR repeat-containing protein slr0751 (248 aa).

TPR repeat units lie at residues 61–94 (PEAI…SPDS), 95–128 (PETH…DRYY), 129–162 (IPPY…DPNR), and 163–196 (YKAY…RPDY).

This Synechocystis sp. (strain ATCC 27184 / PCC 6803 / Kazusa) protein is TPR repeat-containing protein slr0751.